The chain runs to 470 residues: Mucin-like protein 3 (470 aa).

Residues methionine 1 to alanine 29 form the signal peptide. Residues asparagine 30 to alanine 401 lie on the Extracellular side of the membrane. Disordered regions lie at residues arginine 57 to proline 234 and threonine 248 to glutamate 318. Residues serine 75–threonine 87 show a composition bias toward polar residues. A glycan (N-linked (GlcNAc...) asparagine) is linked at asparagine 122. A compositionally biased stretch (basic and acidic residues) spans alanine 132 to glycine 152. A compositionally biased stretch (polar residues) spans threonine 169–glutamate 193. Over residues threonine 194–arginine 203 the composition is skewed to basic and acidic residues. Residues lysine 204–threonine 222 are compositionally biased toward polar residues. Residues lysine 260–serine 273 are compositionally biased toward basic and acidic residues. The span at histidine 283 to serine 295 shows a compositional bias: polar residues. Asparagine 325 carries an N-linked (GlcNAc...) asparagine glycan. Residues isoleucine 402–leucine 422 traverse the membrane as a helical segment. The Cytoplasmic segment spans residues valine 423–proline 470.

The protein localises to the cell membrane. Its subcellular location is the cytoplasm. Functionally, may modulate NF-kappaB signaling and play a role in cell growth. This chain is Mucin-like protein 3, found in Rattus norvegicus (Rat).